The chain runs to 90 residues: Putative transcript Y 12 protein (90 aa).

The protein is Putative transcript Y 12 protein (TTTY12) of Homo sapiens (Human).